Reading from the N-terminus, the 319-residue chain is NADH-quinone oxidoreductase subunit H 1 (319 aa).

The next 8 helical transmembrane spans lie at 1–21, 74–94, 107–127, 147–167, 179–199, 238–258, 262–282, and 293–313; these read MIGLIITATISVTLIMVLLVV, FAYILAPAVAATPVLAGFGVI, VGVLFLIGMLGLTAYAVVLGA, LAYEVFLGLSLMGAVMLAGSL, VWFVVLQPLGAALFCIAGVAA, VLLVSALAVTLFFGGWLGPWL, IWFGLKTGVIAVVFVWLRATL, and FAWKIALPLSLANLLLTGIVV.

Belongs to the complex I subunit 1 family. NDH-1 is composed of 14 different subunits. Subunits NuoA, H, J, K, L, M, N constitute the membrane sector of the complex.

Its subcellular location is the cell inner membrane. It carries out the reaction a quinone + NADH + 5 H(+)(in) = a quinol + NAD(+) + 4 H(+)(out). NDH-1 shuttles electrons from NADH, via FMN and iron-sulfur (Fe-S) centers, to quinones in the respiratory chain. The immediate electron acceptor for the enzyme in this species is believed to be ubiquinone. Couples the redox reaction to proton translocation (for every two electrons transferred, four hydrogen ions are translocated across the cytoplasmic membrane), and thus conserves the redox energy in a proton gradient. This subunit may bind ubiquinone. The sequence is that of NADH-quinone oxidoreductase subunit H 1 from Rhodopseudomonas palustris (strain BisB5).